A 564-amino-acid polypeptide reads, in one-letter code: MTKFVFVTGGVVSSLGKGIAAASLAALLETRGIRVTILKLDPYINVDPGTMNPFQHGEVFVTDDGAETDLDLGHYERFISTKMTRQNNFTTGQIYESVIRKERRGDYLGGTVQVIPHITDEIKLFIRNGVSDAQVAIVEIGGTVGDIESLPFLEAIRQMSVQLPHHDTCFIHLTLLPYISSAGELKTKPTQHSVKELREIGIQPDVLLCRSDRPLPLEERRKIALFTNVREESVISAIDVDNIYKIPALLHEQMLDEIVCHRLDILARPANLTVWKKLVHALEHPEHEVSIALVGKYVDLTESYKSLSEALIHAGIHTRCKINIHYIDSENIEQHGTGCLTNMDAILVPGGFGKRGVEGKIMAISYARNHRIPYLGICLGMQLAVIEFSRNRLQLENAHSTEFDPDTPYPVLGLITEWRDRCGRVEKRSAQTDLGGTMRLGGQECLLKPHTLAHKIYGADKVIERHRHRYEVNAEFIPQLEQAGMHISGLSAEGDLCEMIELPQSEHPWFVACQFHPEFTSTPRNGHPLFKSYIQAAISFAGQSDRTKLHSRNVQESVTTDSSN.

The amidoligase domain stretch occupies residues 1–265 (MTKFVFVTGG…DEIVCHRLDI (265 aa)). Serine 13 lines the CTP pocket. Serine 13 provides a ligand contact to UTP. ATP-binding positions include 14–19 (SLGKGI) and aspartate 71. Aspartate 71 and glutamate 139 together coordinate Mg(2+). CTP-binding positions include 146-148 (DIE), 186-191 (KTKPTQ), and lysine 222. Residues 186-191 (KTKPTQ) and lysine 222 contribute to the UTP site. Residues 290–543 (SIALVGKYVD…IQAAISFAGQ (254 aa)) form the Glutamine amidotransferase type-1 domain. Residue glycine 351 participates in L-glutamine binding. The active-site Nucleophile; for glutamine hydrolysis is the cysteine 378. L-glutamine-binding positions include 379–382 (LGMQ), glutamate 402, and arginine 469. Residues histidine 516 and glutamate 518 contribute to the active site.

This sequence belongs to the CTP synthase family. In terms of assembly, homotetramer.

The enzyme catalyses UTP + L-glutamine + ATP + H2O = CTP + L-glutamate + ADP + phosphate + 2 H(+). It catalyses the reaction L-glutamine + H2O = L-glutamate + NH4(+). The catalysed reaction is UTP + NH4(+) + ATP = CTP + ADP + phosphate + 2 H(+). Its pathway is pyrimidine metabolism; CTP biosynthesis via de novo pathway; CTP from UDP: step 2/2. With respect to regulation, allosterically activated by GTP, when glutamine is the substrate; GTP has no effect on the reaction when ammonia is the substrate. The allosteric effector GTP functions by stabilizing the protein conformation that binds the tetrahedral intermediate(s) formed during glutamine hydrolysis. Inhibited by the product CTP, via allosteric rather than competitive inhibition. Its function is as follows. Catalyzes the ATP-dependent amination of UTP to CTP with either L-glutamine or ammonia as the source of nitrogen. Regulates intracellular CTP levels through interactions with the four ribonucleotide triphosphates. This is CTP synthase from Nitrosomonas europaea (strain ATCC 19718 / CIP 103999 / KCTC 2705 / NBRC 14298).